The chain runs to 382 residues: Neuropeptide Y receptor type 1 (382 aa).

Over 1-33 (MNSTLFSRVENYSVHYNVSENSPFLAFENDDCH) the chain is Extracellular. N-linked (GlcNAc...) asparagine glycans are attached at residues Asn-2, Asn-11, and Asn-17. Residues 34–54 (LPLAVIFTLALAYGAVIILGV) traverse the membrane as a helical segment. The Cytoplasmic portion of the chain corresponds to 55–75 (SGNLALIIIILKQKEMRNVTN). Residues 76–96 (ILIVNLSFSDLLVAVMCLPFT) traverse the membrane as a helical segment. Over 97–115 (FVYTLMDHWVFGETMCKLN) the chain is Extracellular. The cysteines at positions 112 and 197 are disulfide-linked. The chain crosses the membrane as a helical span at residues 116 to 136 (PFVQCVSITVSIFSLVLIAVE). Topologically, residues 137 to 153 (RHQLIINPRGWRPNNRH) are cytoplasmic. The chain crosses the membrane as a helical span at residues 154-174 (AYIGITVIWVLAVASSLPFVI). The Extracellular portion of the chain corresponds to 175-210 (YQILTDEPFQNVSLAAFKDKYVCFDKFPSDSHRLSY). The helical transmembrane segment at 211-231 (TTLLLVLQYFGPLCFIFICYF) threads the bilayer. Residues 232–259 (KIYIRLKRRNNMMDKIRDSKYRSSETKR) are Cytoplasmic-facing. A helical transmembrane segment spans residues 260-280 (INVMLLSIVVAFAVCWLPLTI). Over 281–298 (FNTVFDWNHQIIATCNHN) the chain is Extracellular. Residues 299 to 319 (LLFLLCHLTAMISTCVNPIFY) form a helical membrane-spanning segment. Over 320–382 (GFLNKNFQRD…KISMNDNEKI (63 aa)) the chain is Cytoplasmic. Residue Cys-337 is the site of S-palmitoyl cysteine attachment. Phosphoserine occurs at positions 367 and 375.

Belongs to the G-protein coupled receptor 1 family. Brain.

It localises to the cell membrane. In terms of biological role, receptor for neuropeptide Y and peptide YY. This Rattus norvegicus (Rat) protein is Neuropeptide Y receptor type 1 (Npy1r).